The sequence spans 563 residues: Arginine--tRNA ligase (563 aa).

The 'HIGH' region motif lies at 121–131 (PNIAKPMSMGH).

The protein belongs to the class-I aminoacyl-tRNA synthetase family. In terms of assembly, monomer.

It localises to the cytoplasm. It catalyses the reaction tRNA(Arg) + L-arginine + ATP = L-arginyl-tRNA(Arg) + AMP + diphosphate. The protein is Arginine--tRNA ligase of Leuconostoc citreum (strain KM20).